The following is a 316-amino-acid chain: 4-hydroxy-3-methylbut-2-enyl diphosphate reductase (316 aa).

[4Fe-4S] cluster is bound at residue C12. Residues H41 and H74 each contribute to the (2E)-4-hydroxy-3-methylbut-2-enyl diphosphate site. Residues H41 and H74 each contribute to the dimethylallyl diphosphate site. The isopentenyl diphosphate site is built by H41 and H74. C96 contacts [4Fe-4S] cluster. H124 is a (2E)-4-hydroxy-3-methylbut-2-enyl diphosphate binding site. H124 contributes to the dimethylallyl diphosphate binding site. An isopentenyl diphosphate-binding site is contributed by H124. E126 functions as the Proton donor in the catalytic mechanism. T169 contributes to the (2E)-4-hydroxy-3-methylbut-2-enyl diphosphate binding site. Residue C199 participates in [4Fe-4S] cluster binding. Residues S227, S228, N229, and S271 each coordinate (2E)-4-hydroxy-3-methylbut-2-enyl diphosphate. Residues S227, S228, N229, and S271 each coordinate dimethylallyl diphosphate. Isopentenyl diphosphate contacts are provided by S227, S228, N229, and S271.

The protein belongs to the IspH family. [4Fe-4S] cluster serves as cofactor.

The catalysed reaction is isopentenyl diphosphate + 2 oxidized [2Fe-2S]-[ferredoxin] + H2O = (2E)-4-hydroxy-3-methylbut-2-enyl diphosphate + 2 reduced [2Fe-2S]-[ferredoxin] + 2 H(+). It carries out the reaction dimethylallyl diphosphate + 2 oxidized [2Fe-2S]-[ferredoxin] + H2O = (2E)-4-hydroxy-3-methylbut-2-enyl diphosphate + 2 reduced [2Fe-2S]-[ferredoxin] + 2 H(+). It functions in the pathway isoprenoid biosynthesis; dimethylallyl diphosphate biosynthesis; dimethylallyl diphosphate from (2E)-4-hydroxy-3-methylbutenyl diphosphate: step 1/1. Its pathway is isoprenoid biosynthesis; isopentenyl diphosphate biosynthesis via DXP pathway; isopentenyl diphosphate from 1-deoxy-D-xylulose 5-phosphate: step 6/6. Functionally, catalyzes the conversion of 1-hydroxy-2-methyl-2-(E)-butenyl 4-diphosphate (HMBPP) into a mixture of isopentenyl diphosphate (IPP) and dimethylallyl diphosphate (DMAPP). Acts in the terminal step of the DOXP/MEP pathway for isoprenoid precursor biosynthesis. The chain is 4-hydroxy-3-methylbut-2-enyl diphosphate reductase from Xylella fastidiosa (strain M23).